Here is a 1426-residue protein sequence, read N- to C-terminus: ABC transporter G family member 31 (1426 aa).

An ABC transporter 1 domain is found at 142-415 (LRHLRIYRGG…FAGMGFRCPE (274 aa)). 175 to 182 (GPPSSGKT) lines the ATP pocket. Residues 493 to 706 (ELLKSNFQWQ…AQNAISVNEF (214 aa)) enclose the ABC transmembrane type-2 1 domain. The next 7 helical transmembrane spans lie at 511–531 (FIYVFKFIQLLLVALITMTVF), 544–564 (GIIYLGALYFAIVMILFNGFT), 592–612 (LPSWLLSIPTSLIESGMWVLV), 630–650 (FLLLFFLHQTSLALFRVMASL), 655–675 (IVANTFGSFALLVVMILGGFI), 681–701 (IPAWWIWGYWISPMMYAQNAI), and 741–761 (IGVGALFGYAIVLNFLFTLFL). The 253-residue stretch at 824–1076 (MCFKNINYYV…NLVEFFEAIP (253 aa)) folds into the ABC transporter 2 domain. 869-876 (GVSGAGKT) provides a ligand contact to ATP. Residues 1149–1363 (AQYAACLWKQ…TLYGLLTSQF (215 aa)) enclose the ABC transmembrane type-2 2 domain. 7 helical membrane-spanning segments follow: residues 1168–1188 (YTAVRFFYTVIISLMFGTICW), 1200–1220 (IFNAMGAMYAAVLFIGITNAT), 1245–1265 (LPFAFSLVTVEFPYILVQSLI), 1283–1303 (FLWYLFFMYFTLLYFTFYGMM), 1313–1333 (VAPIIAAPFYTLWNLFCGFMI), 1341–1363 (WWRWYYWANPVSWTLYGLLTSQF), and 1398–1418 (VVAGMVAGFCVLFAVVFALAI).

Belongs to the ABC transporter superfamily. ABCG family. PDR (TC 3.A.1.205) subfamily.

It is found in the membrane. May be a general defense protein. The chain is ABC transporter G family member 31 from Oryza sativa subsp. japonica (Rice).